The following is an 87-amino-acid chain: Bradykinin-potentiating peptide NDBP12 (87 aa).

Positions Met1–Ser22 are cleaved as a signal peptide. Low complexity predominate over residues Pro64–Pro75. Positions Pro64–Arg87 are disordered.

It belongs to the non-disulfide-bridged peptide (NDBP) superfamily. Long chain multifunctional peptide (group 2) family. As to expression, expressed by the venom gland.

It localises to the secreted. Its function is as follows. Inhibits angiotensin-converting enzyme (ACE), but does not serve as substrate for the enzyme. Potentiates bradykinin (BK) on the isolated guinea pig ileum as well as the isolated rat uterus for contraction. Also potentiates in vivo the depressor effect of BK on arterial blood pressure in the normotensive anesthetized rat. The chain is Bradykinin-potentiating peptide NDBP12 from Lychas mucronatus (Chinese swimming scorpion).